Reading from the N-terminus, the 195-residue chain is Molybdenum cofactor guanylyltransferase (195 aa).

Residues 10–12, K23, N51, D69, and D99 each bind GTP; that span reads LAG. D99 serves as a coordination point for Mg(2+).

The protein belongs to the MobA family. Monomer. Mg(2+) is required as a cofactor.

The protein resides in the cytoplasm. The catalysed reaction is Mo-molybdopterin + GTP + H(+) = Mo-molybdopterin guanine dinucleotide + diphosphate. Functionally, transfers a GMP moiety from GTP to Mo-molybdopterin (Mo-MPT) cofactor (Moco or molybdenum cofactor) to form Mo-molybdopterin guanine dinucleotide (Mo-MGD) cofactor. The chain is Molybdenum cofactor guanylyltransferase from Histophilus somni (strain 129Pt) (Haemophilus somnus).